We begin with the raw amino-acid sequence, 239 residues long: Ribosomal RNA small subunit methyltransferase G (239 aa).

S-adenosyl-L-methionine contacts are provided by residues Gly78, Phe83, 129 to 130, and Arg148; that span reads AE.

It belongs to the methyltransferase superfamily. RNA methyltransferase RsmG family.

It localises to the cytoplasm. Specifically methylates the N7 position of a guanine in 16S rRNA. The polypeptide is Ribosomal RNA small subunit methyltransferase G (Alkaliphilus oremlandii (strain OhILAs) (Clostridium oremlandii (strain OhILAs))).